Reading from the N-terminus, the 274-residue chain is 2,3,4,5-tetrahydropyridine-2,6-dicarboxylate N-succinyltransferase (274 aa).

Positions 104 and 141 each coordinate substrate.

Belongs to the transferase hexapeptide repeat family. As to quaternary structure, homotrimer.

It localises to the cytoplasm. It carries out the reaction (S)-2,3,4,5-tetrahydrodipicolinate + succinyl-CoA + H2O = (S)-2-succinylamino-6-oxoheptanedioate + CoA. The protein operates within amino-acid biosynthesis; L-lysine biosynthesis via DAP pathway; LL-2,6-diaminopimelate from (S)-tetrahydrodipicolinate (succinylase route): step 1/3. The polypeptide is 2,3,4,5-tetrahydropyridine-2,6-dicarboxylate N-succinyltransferase (Citrobacter koseri (strain ATCC BAA-895 / CDC 4225-83 / SGSC4696)).